The sequence spans 431 residues: MQLNSNGWHVDDHIVVAVSTGIDSMCLLYQLLNDYKDSYRKLTCLHVNHGVRSASIEEARFLEAYCERHHIDLHIKKLDLSHSLDRNNSIQNEARIKRYEWFDEMMNVLEADVLLTAHHLDDQLETIMYRIFNGKSTRNKLGFDELSKRKGYQIYRPLLAVSKKEIKQFQERYHIPYFEDESNKDNKYVRNDIRNRIIPAIDENNQLKVSHLLKLKQWHDEQYDILQYSAKQFIQEFVKFDEQSKYLEVSRQAFNNLPNSLKMVVLDCLLSKYYELFNISAKTYEEWFKQFSSKKAQFSINLTDKWIIQIAYGKLIIMAKNNGDTYFRVQTIKKPGNYIFNKYRLEIHSNLPKCLFPLTVRTRQSGDTFKLNGRDGYKKVNRLFIDCKVPQWVRDQMPIVLDKQQRIIAVGDLYQQQTIKKWIIISKNGDE.

19–24 (STGIDS) is an ATP binding site.

The protein belongs to the tRNA(Ile)-lysidine synthase family.

The protein resides in the cytoplasm. The catalysed reaction is cytidine(34) in tRNA(Ile2) + L-lysine + ATP = lysidine(34) in tRNA(Ile2) + AMP + diphosphate + H(+). Functionally, ligates lysine onto the cytidine present at position 34 of the AUA codon-specific tRNA(Ile) that contains the anticodon CAU, in an ATP-dependent manner. Cytidine is converted to lysidine, thus changing the amino acid specificity of the tRNA from methionine to isoleucine. This Staphylococcus aureus (strain COL) protein is tRNA(Ile)-lysidine synthase.